A 394-amino-acid polypeptide reads, in one-letter code: Nicotinate phosphoribosyltransferase (394 aa).

His218 carries the phosphohistidine; by autocatalysis modification.

The protein belongs to the NAPRTase family. In terms of processing, transiently phosphorylated on a His residue during the reaction cycle. Phosphorylation strongly increases the affinity for substrates and increases the rate of nicotinate D-ribonucleotide production. Dephosphorylation regenerates the low-affinity form of the enzyme, leading to product release.

It carries out the reaction nicotinate + 5-phospho-alpha-D-ribose 1-diphosphate + ATP + H2O = nicotinate beta-D-ribonucleotide + ADP + phosphate + diphosphate. It functions in the pathway cofactor biosynthesis; NAD(+) biosynthesis; nicotinate D-ribonucleotide from nicotinate: step 1/1. In terms of biological role, catalyzes the synthesis of beta-nicotinate D-ribonucleotide from nicotinate and 5-phospho-D-ribose 1-phosphate at the expense of ATP. The protein is Nicotinate phosphoribosyltransferase of Xylella fastidiosa (strain 9a5c).